Consider the following 198-residue polypeptide: Elongation factor Ts (198 aa).

The segment at 81 to 84 is involved in Mg(2+) ion dislocation from EF-Tu; it reads TDFV.

Belongs to the EF-Ts family.

It localises to the cytoplasm. In terms of biological role, associates with the EF-Tu.GDP complex and induces the exchange of GDP to GTP. It remains bound to the aminoacyl-tRNA.EF-Tu.GTP complex up to the GTP hydrolysis stage on the ribosome. The polypeptide is Elongation factor Ts (Dictyoglomus turgidum (strain DSM 6724 / Z-1310)).